The following is a 211-amino-acid chain: Small ribosomal subunit protein uS3c (211 aa).

Residues isoleucine 39–glutamine 109 enclose the KH type-2 domain.

It belongs to the universal ribosomal protein uS3 family. Part of the 30S ribosomal subunit.

The protein localises to the plastid. The protein resides in the chloroplast. This is Small ribosomal subunit protein uS3c (rps3) from Ostreococcus tauri.